Consider the following 547-residue polypeptide: Fumarate reductase (CoM/CoB) subunit A (547 aa).

Belongs to the FAD-dependent oxidoreductase 2 family. In terms of assembly, subunit A of the heterodimeric fumarate reductase of methanogenic Archaea, composed of subunits A (TfrA) and B (TfrB). An oxidized flavin is required as a cofactor.

It is found in the cytoplasm. The catalysed reaction is coenzyme B + coenzyme M + fumarate = coenzyme M-coenzyme B heterodisulfide + succinate. Functionally, catalyzes the reduction of fumarate with reduced coenzyme M (CoM-S-H) and coenzyme B (CoB-S-H). In vitro, is able to reduces fumarate with reduced benzyl viologen, oxidize CoM-S-H and CoB-S-H to CoM-S-S-CoB with methylene blue, and reduce CoM-S-S-CoB with reduced benzyl viologen. The enzyme has specificity for the two thiol compounds as the CoB--CoM heterodisulfide reductase. The enzyme is very sensitive to oxygen. This chain is Fumarate reductase (CoM/CoB) subunit A, found in Methanothermobacter marburgensis (strain ATCC BAA-927 / DSM 2133 / JCM 14651 / NBRC 100331 / OCM 82 / Marburg) (Methanobacterium thermoautotrophicum).